A 110-amino-acid polypeptide reads, in one-letter code: UPF0060 membrane protein Haur_1798 (110 aa).

The next 4 membrane-spanning stretches (helical) occupy residues 7 to 27 (VVLFILAGLAEIAGGYLVWQW), 33 to 53 (SIWFGVLGAILLVGYGFLPTL), 63 to 83 (VYAAYGGVFIVLSLAWGWLID), and 89 to 109 (QPSLVGACLALVGAAIILYWP).

This sequence belongs to the UPF0060 family.

Its subcellular location is the cell membrane. In Herpetosiphon aurantiacus (strain ATCC 23779 / DSM 785 / 114-95), this protein is UPF0060 membrane protein Haur_1798.